Here is a 71-residue protein sequence, read N- to C-terminus: Gas vesicle protein A (71 aa).

This sequence belongs to the gas vesicle GvpA family. In terms of assembly, the gas vesicle shell is 2 nm thick and consists of a single layer of this protein. It forms helical ribs nearly perpendicular to the long axis of the vesicle.

Its subcellular location is the gas vesicle shell. Gas vesicles are hollow, gas filled proteinaceous nanostructures found in some microorganisms. During planktonic growth they allow positioning of the organism at a favorable depth for light or nutrient acquisition. GvpA forms the protein shell. Its function is as follows. Cluster expression in E.coli (gvpA1-gvpA2-gvpC-gvpN-gvpJ-gvpK-gvpF-gvpG-gvpV-gvpW) allows cells to float and produces irregularly shaped gas vesicles. In Nostoc sp. (strain PCC 7120 / SAG 25.82 / UTEX 2576), this protein is Gas vesicle protein A.